A 526-amino-acid polypeptide reads, in one-letter code: DDB1- and CUL4-associated factor 17 (526 aa).

The next 2 membrane-spanning stretches (helical) occupy residues 200–220 (ILMR…MLEI) and 237–257 (GVLA…EYIV).

It is found in the membrane. It localises to the nucleus. The protein localises to the nucleolus. It participates in protein modification; protein ubiquitination. May function as a substrate receptor for CUL4-DDB1 E3 ubiquitin-protein ligase complex. This Danio rerio (Zebrafish) protein is DDB1- and CUL4-associated factor 17 (dcaf17).